The following is a 119-amino-acid chain: Autophagy-related protein 8c (119 aa).

A lipid anchor (Phosphatidylethanolamine amidated glycine) is attached at G117. The propeptide at 118–119 is removed in mature form; the sequence is LV.

Belongs to the ATG8 family. As to quaternary structure, interacts with ATG4. Interacts with NBR1. In terms of processing, the C-terminal 2 residues are removed by ATG4 to expose Gly-117 at the C-terminus. This Gly-117 forms then a thioester bond with the 'Cys-558' of ATG7 (E1-like activating enzyme) before being transferred to the 'Cys-258' of ATG3 (the specific E2 conjugating enzyme), in order to be finally amidated with phosphatidylethanolamine. This lipid modification anchors ATG8 to autophagosomes. Constitutively expressed.

Its subcellular location is the cytoplasmic vesicle. It is found in the autophagosome membrane. The protein localises to the vacuole membrane. The protein resides in the cytoplasm. It localises to the cytoskeleton. Its function is as follows. Ubiquitin-like modifier involved in autophagosomes formation. May mediate the delivery of the autophagosomes to the vacuole via the microtubule cytoskeleton. This is Autophagy-related protein 8c (ATG8C) from Arabidopsis thaliana (Mouse-ear cress).